A 699-amino-acid polypeptide reads, in one-letter code: Elongation factor G (699 aa).

Residues 8 to 290 (NRYRNIGICA…AVIEFLPAPD (283 aa)) form the tr-type G domain. GTP contacts are provided by residues 17-24 (AHVDAGKT), 88-92 (DTPGH), and 142-145 (NKMD).

The protein belongs to the TRAFAC class translation factor GTPase superfamily. Classic translation factor GTPase family. EF-G/EF-2 subfamily.

It localises to the cytoplasm. In terms of biological role, catalyzes the GTP-dependent ribosomal translocation step during translation elongation. During this step, the ribosome changes from the pre-translocational (PRE) to the post-translocational (POST) state as the newly formed A-site-bound peptidyl-tRNA and P-site-bound deacylated tRNA move to the P and E sites, respectively. Catalyzes the coordinated movement of the two tRNA molecules, the mRNA and conformational changes in the ribosome. The protein is Elongation factor G of Alcanivorax borkumensis (strain ATCC 700651 / DSM 11573 / NCIMB 13689 / SK2).